The primary structure comprises 481 residues: Sulfate adenylyltransferase subunit 1 (481 aa).

The tr-type G domain maps to 22-236; that stretch reads KDLLRFITCG…LLDSIRLDAD (215 aa). The G1 stretch occupies residues 31–38; it reads GSVDDGKS. 31–38 contacts GTP; it reads GSVDDGKS. Residues 89–93 form a G2 region; that stretch reads GITID. Residues 110–113 form a G3 region; that stretch reads DCPG. GTP-binding positions include 110–114 and 165–168; these read DCPGH and NKMD. Residues 165–168 are G4; it reads NKMD. Residues 202-204 form a G5 region; it reads SAL.

The protein belongs to the TRAFAC class translation factor GTPase superfamily. Classic translation factor GTPase family. CysN/NodQ subfamily. In terms of assembly, heterodimer composed of CysD, the smaller subunit, and CysN.

The enzyme catalyses sulfate + ATP + H(+) = adenosine 5'-phosphosulfate + diphosphate. It participates in sulfur metabolism; hydrogen sulfide biosynthesis; sulfite from sulfate: step 1/3. Functionally, with CysD forms the ATP sulfurylase (ATPS) that catalyzes the adenylation of sulfate producing adenosine 5'-phosphosulfate (APS) and diphosphate, the first enzymatic step in sulfur assimilation pathway. APS synthesis involves the formation of a high-energy phosphoric-sulfuric acid anhydride bond driven by GTP hydrolysis by CysN coupled to ATP hydrolysis by CysD. In Laribacter hongkongensis (strain HLHK9), this protein is Sulfate adenylyltransferase subunit 1.